Reading from the N-terminus, the 154-residue chain is 17 kDa surface antigen (154 aa).

The first 19 residues, 1 to 19, serve as a signal peptide directing secretion; sequence MKLLSKIMIIALAASMLQA. Cysteine 20 is lipidated: N-palmitoyl cysteine. Cysteine 20 carries S-diacylglycerol cysteine lipidation.

The protein belongs to the rickettsiale 17 kDa surface antigen family.

The protein localises to the cell outer membrane. This chain is 17 kDa surface antigen (omp), found in Rickettsia rhipicephali.